A 395-amino-acid chain; its full sequence is Flap endonuclease 1 (395 aa).

An N-domain region spans residues 1–108 (MGILGLSKLL…DELEMRRQKA (108 aa)). A Mg(2+)-binding site is contributed by Asp34. DNA is bound at residue Arg74. Asp90 is a binding site for Mg(2+). The disordered stretch occupies residues 116 to 136 (EKAKDAGDDEMMEKMSKRTVR). The interval 126-257 (MMEKMSKRTV…QKAWEGIQRY (132 aa)) is I-domain. Mg(2+)-binding residues include Glu162, Glu164, Asp183, and Asp185. Glu162 provides a ligand contact to DNA. DNA is bound by residues Gly235 and Asp237. Asp237 serves as a coordination point for Mg(2+). Positions 340-348 (TQGRLDSFF) are interaction with PCNA.

It belongs to the XPG/RAD2 endonuclease family. FEN1 subfamily. Interacts with PCNA. Three molecules of FEN1 bind to one PCNA trimer with each molecule binding to one PCNA monomer. PCNA stimulates the nuclease activity without altering cleavage specificity. The cofactor is Mg(2+). Post-translationally, phosphorylated. Phosphorylation upon DNA damage induces relocalization to the nuclear plasma.

The protein localises to the nucleus. It is found in the nucleolus. It localises to the nucleoplasm. The protein resides in the mitochondrion. In terms of biological role, structure-specific nuclease with 5'-flap endonuclease and 5'-3' exonuclease activities involved in DNA replication and repair. During DNA replication, cleaves the 5'-overhanging flap structure that is generated by displacement synthesis when DNA polymerase encounters the 5'-end of a downstream Okazaki fragment. It enters the flap from the 5'-end and then tracks to cleave the flap base, leaving a nick for ligation. Also involved in the long patch base excision repair (LP-BER) pathway, by cleaving within the apurinic/apyrimidinic (AP) site-terminated flap. Acts as a genome stabilization factor that prevents flaps from equilibrating into structures that lead to duplications and deletions. Also possesses 5'-3' exonuclease activity on nicked or gapped double-stranded DNA, and exhibits RNase H activity. Also involved in replication and repair of rDNA and in repairing mitochondrial DNA. This Leishmania major protein is Flap endonuclease 1.